The sequence spans 90 residues: Probable Fe(2+)-trafficking protein (90 aa).

This sequence belongs to the Fe(2+)-trafficking protein family.

Could be a mediator in iron transactions between iron acquisition and iron-requiring processes, such as synthesis and/or repair of Fe-S clusters in biosynthetic enzymes. This is Probable Fe(2+)-trafficking protein from Colwellia psychrerythraea (strain 34H / ATCC BAA-681) (Vibrio psychroerythus).